The chain runs to 511 residues: Probable cytochrome P450 4ac2 (511 aa).

Positions 318 and 455 each coordinate heme.

It belongs to the cytochrome P450 family. It depends on heme as a cofactor.

The protein localises to the endoplasmic reticulum membrane. It is found in the microsome membrane. In terms of biological role, may be involved in the metabolism of insect hormones and in the breakdown of synthetic insecticides. In Drosophila melanogaster (Fruit fly), this protein is Probable cytochrome P450 4ac2 (Cyp4ac2).